Here is a 129-residue protein sequence, read N- to C-terminus: Serum amyloid A protein (129 aa).

A signal peptide spans 1 to 18 (MKLFTGLVFCSLVLGVSS). A Pyrrolidone carboxylic acid modification is found at Gln-19. Residues 88-129 (FFRHGNSGHGAEDSKADQAANEWGRSGKDPNHFRPAGLPSKY) are disordered. Positions 112–129 (RSGKDPNHFRPAGLPSKY) are cleaved as a propeptide — often cleaved during amyloidogenesis.

The protein belongs to the SAA family. As to expression, expressed by the liver; secreted in plasma.

The protein localises to the secreted. In terms of biological role, major acute phase reactant. Apolipoprotein of the HDL complex. In Felis catus (Cat), this protein is Serum amyloid A protein (SAA1).